Here is a 315-residue protein sequence, read N- to C-terminus: tRNA-dihydrouridine(16) synthase (315 aa).

FMN contacts are provided by residues 7-9 and Gln-68; that span reads PME. The active-site Proton donor is Cys-98. FMN contacts are provided by residues Lys-139, 200-202, and 224-225; these read NGE and GR.

The protein belongs to the Dus family. DusC subfamily. It depends on FMN as a cofactor.

The catalysed reaction is 5,6-dihydrouridine(16) in tRNA + NADP(+) = uridine(16) in tRNA + NADPH + H(+). It carries out the reaction 5,6-dihydrouridine(16) in tRNA + NAD(+) = uridine(16) in tRNA + NADH + H(+). Functionally, catalyzes the synthesis of 5,6-dihydrouridine (D), a modified base found in the D-loop of most tRNAs, via the reduction of the C5-C6 double bond in target uridines. Specifically modifies U16 in tRNAs. This Shigella flexneri protein is tRNA-dihydrouridine(16) synthase.